The following is a 544-amino-acid chain: Lysophosphatidylcholine acyltransferase 2 (544 aa).

The Cytoplasmic portion of the chain corresponds to 1–57; sequence MSRCAQAAEVAATVPGAGVGNVGLRPPMVPRQASFFPPPVPNPFVQQTQIGSARRVQ. The helical; Signal-anchor for type II membrane protein transmembrane segment at 58-78 threads the bilayer; sequence IVLLGIILLPIRVLLVALILL. Residues 79–544 are Lumenal-facing; that stretch reads LAWPFAAIST…EESTSDKKDD (466 aa). The short motif at 146 to 151 is the HXXXXD motif element; that stretch reads HSTFFD. Residues 220-223 carry the EGTC motif motif; it reads EGTC. 2 EF-hand domains span residues 391–426 and 428–463; these read PVSDVLRQLFALFDRNHDGSIDFREYVIGLAVLCNP and NTEEIIQVAFKLFDVDEDGYITEEEFSTILQASLGV. Residues aspartate 404, asparagine 406, aspartate 408, serine 410, glutamate 415, aspartate 441, aspartate 443, aspartate 445, tyrosine 447, and glutamate 452 each contribute to the Ca(2+) site. A compositionally biased stretch (polar residues) spans 518–529; it reads VQTTPSTASNKV. A disordered region spans residues 518–544; it reads VQTTPSTASNKVSPEKHEESTSDKKDD. The segment covering 530-544 has biased composition (basic and acidic residues); the sequence is SPEKHEESTSDKKDD.

The protein belongs to the 1-acyl-sn-glycerol-3-phosphate acyltransferase family.

It localises to the endoplasmic reticulum membrane. The protein localises to the golgi apparatus membrane. It is found in the cell membrane. The protein resides in the lipid droplet. The catalysed reaction is a 1-acyl-sn-glycero-3-phosphocholine + an acyl-CoA = a 1,2-diacyl-sn-glycero-3-phosphocholine + CoA. It carries out the reaction a 1-O-alkyl-sn-glycero-3-phosphocholine + acetyl-CoA = a 1-O-alkyl-2-acetyl-sn-glycero-3-phosphocholine + CoA. The enzyme catalyses a 1-acyl-sn-glycero-3-phosphate + an acyl-CoA = a 1,2-diacyl-sn-glycero-3-phosphate + CoA. It catalyses the reaction a 1-O-(1Z-alkenyl)-sn-glycero-3-phosphocholine + an acyl-CoA = a 1-O-(1Z-alkenyl)-2-acyl-sn-glycero-3-phosphocholine + CoA. The catalysed reaction is 1-hexadecanoyl-sn-glycero-3-phosphate + (9Z)-octadecenoyl-CoA = 1-hexadecanoyl-2-(9Z-octadecenoyl)-sn-glycero-3-phosphate + CoA. It carries out the reaction 1-(9Z-octadecenoyl)-sn-glycero-3-phosphate + (9Z)-octadecenoyl-CoA = 1,2-di-(9Z-octadecenoyl)-sn-glycero-3-phosphate + CoA. The enzyme catalyses 1-(9Z-octadecenoyl)-sn-glycero-3-phosphate + hexadecanoyl-CoA = 1-(9Z)-octadecenoyl-2-hexadecanoyl-sn-glycero-3-phosphate + CoA. It catalyses the reaction 1-heptadecanoyl-sn-glycero-3-phosphate + (9Z)-octadecenoyl-CoA = 1-heptadecanoyl-2-(9Z)-octadecenoyl-sn-glycero-3-phosphate + CoA. The catalysed reaction is 1-octadecanoyl-sn-glycero-3-phosphate + (9Z)-octadecenoyl-CoA = 1-octadecanoyl-2-(9Z-octadecenoyl)-sn-glycero-3-phosphate + CoA. It carries out the reaction heptadecanoyl-CoA + 1-(9Z-octadecenoyl)-sn-glycero-3-phosphate = 1-(9Z)-octadecenoyl-2-heptadecanoyl-sn-glycero-3-phosphate + CoA. The enzyme catalyses 1-(9Z-octadecenoyl)-sn-glycero-3-phosphate + (9Z,12Z)-octadecadienoyl-CoA = 1-(9Z)-octadecenoyl-2-(9Z,12Z)-octadecadienoyl-sn-glycero-3-phosphate + CoA. It catalyses the reaction 1-(9Z-octadecenoyl)-sn-glycero-3-phosphate + tetradecanoyl-CoA = 1-(9Z)-octadecenoyl-2-tetradecanoyl-sn-glycero-3-phosphate + CoA. The catalysed reaction is pentadecanoyl-CoA + 1-(9Z-octadecenoyl)-sn-glycero-3-phosphate = 1-(9Z)-octadecenoyl-2-pentadecanoyl-sn-glycero-3-phosphate + CoA. It carries out the reaction nonadecanoyl-CoA + 1-(9Z-octadecenoyl)-sn-glycero-3-phosphate = 1-(9Z)-octadecenoyl-2-nonadecanoyl-sn-glycero-3-phosphate + CoA. The enzyme catalyses 1-hexadecanoyl-sn-glycero-3-phosphocholine + (9Z)-octadecenoyl-CoA = 1-hexadecanoyl-2-(9Z-octadecenoyl)-sn-glycero-3-phosphocholine + CoA. It catalyses the reaction 1-O-hexadecyl-sn-glycero-3-phosphocholine + acetyl-CoA = 1-O-hexadecyl-2-acetyl-sn-glycero-3-phosphocholine + CoA. The catalysed reaction is 1-O-octadecyl-sn-glycero-3-phosphocholine + acetyl-CoA = 1-O-octadecyl-2-acetyl-sn-glycero-3-phosphocholine + CoA. It carries out the reaction 1-hexadecanoyl-sn-glycero-3-phosphocholine + acetyl-CoA = 1-hexadecanoyl-2-acetyl-sn-glycero-3-phosphocholine + CoA. The enzyme catalyses 1-octadecanoyl-sn-glycero-3-phosphocholine + acetyl-CoA = 1-octadecanoyl-2-acetyl-sn-glycero-3-phosphocholine + CoA. It catalyses the reaction a 1-O-(1Z-alkenyl)-sn-glycero-3-phosphocholine + acetyl-CoA = 1-O-(1Z)-alkenyl-2-acetyl-sn-glycero-3-phosphocholine + CoA. The catalysed reaction is 1-O-octadecyl-sn-glycero-3-phosphocholine + (5Z,8Z,11Z,14Z)-eicosatetraenoyl-CoA = 1-O-octadecyl-2-(5Z,8Z,11Z,14Z)-eicosatetraenoyl-sn-glycero-3-phosphocholine + CoA. It participates in lipid metabolism; phospholipid metabolism. Its function is as follows. Exhibits both acyltransferase and acetyltransferase activities. Catalyzes the conversion of lysophosphatidylcholine (1-acyl-sn-glycero-3-phosphocholine or LPC) into phosphatidylcholine (1,2-diacyl-sn-glycero-3-phosphocholine or PC). Catalyzes the conversion 1-acyl-sn-glycerol-3-phosphate (lysophosphatidic acid or LPA) into 1,2-diacyl-sn-glycerol-3-phosphate (phosphatidic acid or PA) by incorporating an acyl moiety at the sn-2 position of the glycerol backbone. Involved in platelet-activating factor (PAF) biosynthesis by catalyzing the conversion of the PAF precursor, 1-O-alkyl-sn-glycero-3-phosphocholine (lyso-PAF) into 1-O-alkyl-2-acetyl-sn-glycero-3-phosphocholine (PAF). Also converts lyso-PAF to 1-O-alkyl-2-acyl-sn-glycero-3-phosphocholine (PC), a major component of cell membranes and a PAF precursor. Under resting conditions, acyltransferase activity is preferred. Upon acute inflammatory stimulus, acetyltransferase activity is enhanced and PAF synthesis increases. Involved in the regulation of lipid droplet number and size. This Homo sapiens (Human) protein is Lysophosphatidylcholine acyltransferase 2 (LPCAT2).